We begin with the raw amino-acid sequence, 289 residues long: NFU1 iron-sulfur cluster scaffold homolog, mitochondrial (289 aa).

The transit peptide at 1 to 56 (MAKLISYAKGGFLRNTRLTSRAVPQVYQHATSSRGFVHLTSSVAQSSAIHVSTPST) directs the protein to the mitochondrion. Positions 183-251 (IKELLDTRIR…IPEVESVEQV (69 aa)) are nifU. The [4Fe-4S] cluster site is built by Cys-220 and Cys-223. Residues 267 to 289 (ERNLKQKDTSSTAPVGIGGGPAN) form a disordered region.

This sequence belongs to the NifU family.

It localises to the mitochondrion. Molecular scaffold for [Fe-S] cluster assembly of mitochondrial iron-sulfur proteins. This is NFU1 iron-sulfur cluster scaffold homolog, mitochondrial from Drosophila willistoni (Fruit fly).